The chain runs to 526 residues: Arginine/ornithine antiporter ArcD1 (526 aa).

The next 14 membrane-spanning stretches (helical) occupy residues 8 to 28, 41 to 61, 88 to 108, 128 to 148, 160 to 180, 220 to 240, 255 to 275, 297 to 317, 354 to 374, 378 to 398, 407 to 427, 428 to 448, 466 to 486, and 495 to 515; these read GIGLAALVAIIVSGAIGGGVF, GGVVISWIVIGFGILMLVLSL, FISGWGYWLSAWAGNIAFAVL, LTILSVIVVSIVSWGLTLLVM, IVLVAKLIPLFVFVIAGIVTF, VKGSLMVMIWVFVGIEGAAMM, IFGLIALLVIYILLSLLPFGF, VGGWGGSLMAIGLVISLLGAW, LLLTQLIVQIFLIVTYFVADA, FVYLCTAVIMICYALVGLYLF, TSNIIIGFIAAAFQILALYYS, GWQFVWLSLILYAVGFILYAL, FILTVLGILAVFGVYGNWLGL, and NTLLVAVVPLIVVTFIVYFVV.

It belongs to the amino acid-polyamine-organocation (APC) superfamily. Basic amino acid/polyamine antiporter (APA) (TC 2.A.3.2) family.

It is found in the cell membrane. The catalysed reaction is L-ornithine(in) + L-arginine(out) = L-ornithine(out) + L-arginine(in). Its function is as follows. Catalyzes electroneutral exchange between L-arginine and L-ornithine. Can also efficiently translocate L-histidine and L-lysine. ArcD1 is the main L-arginine/L-ornithine exchanger in the arginine deiminase (ADI) pathway. The chain is Arginine/ornithine antiporter ArcD1 from Lactococcus lactis subsp. cremoris (strain MG1363).